The following is a 45-amino-acid chain: Large ribosomal subunit protein bL34 (45 aa).

This sequence belongs to the bacterial ribosomal protein bL34 family.

The chain is Large ribosomal subunit protein bL34 from Paenarthrobacter aurescens (strain TC1).